We begin with the raw amino-acid sequence, 186 residues long: DNA-directed RNA polymerase 22 kDa subunit (186 aa).

Belongs to the poxviridae DNA-directed RNA polymerase 22 kDa subunit family. The DNA-dependent RNA polymerase used for intermediate and late genes expression consists of eight subunits Rpo30/OPG66, Rpo7/OPG90, Rpo22/OPG103, Rpo147/OPG105, Rpo18/OPG119, Rpo19/OPG131, Rpo132/OPG151 and Rpo35/OPG156. The same holoenzyme, with the addition of the transcription-specificity factor OPG109, is used for early gene expression.

Its subcellular location is the virion. It catalyses the reaction RNA(n) + a ribonucleoside 5'-triphosphate = RNA(n+1) + diphosphate. Functionally, part of the DNA-dependent RNA polymerase which catalyzes the transcription of viral DNA into RNA using the four ribonucleoside triphosphates as substrates. Responsible for the transcription of early, intermediate and late genes. DNA-dependent RNA polymerase associates with the early transcription factor (ETF), itself composed of OPG118 and OPG133, thereby allowing the early genes transcription. Late transcription, and probably also intermediate transcription, require newly synthesized RNA polymerase. The chain is DNA-directed RNA polymerase 22 kDa subunit (OPG103) from Vertebrata (FPV).